The primary structure comprises 293 residues: Formamidopyrimidine-DNA glycosylase (293 aa).

Proline 2 functions as the Schiff-base intermediate with DNA in the catalytic mechanism. Glutamate 3 acts as the Proton donor in catalysis. The active-site Proton donor; for beta-elimination activity is lysine 58. DNA is bound by residues histidine 104, arginine 127, and arginine 170. The FPG-type zinc finger occupies 257-293; sequence SVYGREGKPCRNPACGGTVERVVQSGRSTFFCASCQT. The Proton donor; for delta-elimination activity role is filled by arginine 283.

It belongs to the FPG family. As to quaternary structure, monomer. The cofactor is Zn(2+).

It catalyses the reaction Hydrolysis of DNA containing ring-opened 7-methylguanine residues, releasing 2,6-diamino-4-hydroxy-5-(N-methyl)formamidopyrimidine.. It carries out the reaction 2'-deoxyribonucleotide-(2'-deoxyribose 5'-phosphate)-2'-deoxyribonucleotide-DNA = a 3'-end 2'-deoxyribonucleotide-(2,3-dehydro-2,3-deoxyribose 5'-phosphate)-DNA + a 5'-end 5'-phospho-2'-deoxyribonucleoside-DNA + H(+). Functionally, involved in base excision repair of DNA damaged by oxidation or by mutagenic agents. Acts as a DNA glycosylase that recognizes and removes damaged bases. Has a preference for oxidized purines, such as 7,8-dihydro-8-oxoguanine (8-oxoG). Has AP (apurinic/apyrimidinic) lyase activity and introduces nicks in the DNA strand. Cleaves the DNA backbone by beta-delta elimination to generate a single-strand break at the site of the removed base with both 3'- and 5'-phosphates. This Brucella canis (strain ATCC 23365 / NCTC 10854 / RM-666) protein is Formamidopyrimidine-DNA glycosylase.